Consider the following 443-residue polypeptide: UDP-N-acetylmuramate--L-alanine ligase (443 aa).

Residue 110–116 (GAHGKTS) coordinates ATP.

Belongs to the MurCDEF family.

The protein resides in the cytoplasm. The enzyme catalyses UDP-N-acetyl-alpha-D-muramate + L-alanine + ATP = UDP-N-acetyl-alpha-D-muramoyl-L-alanine + ADP + phosphate + H(+). The protein operates within cell wall biogenesis; peptidoglycan biosynthesis. Functionally, cell wall formation. This Streptococcus agalactiae serotype V (strain ATCC BAA-611 / 2603 V/R) protein is UDP-N-acetylmuramate--L-alanine ligase.